The chain runs to 461 residues: MNIPQLTALCLRYHGVLLDASEEVVHVAVVDAPSHELLDALHFATTKRIEITCWTRQQMEGHASRTQQTLPVAVQEKHQPKAELLTRTLQSALEQRASDIHIEPADNAYRIRLRIDGVLHPLPDVSPDAGVALTARLKVLGNLDIAEHRLPQDGQFTVELAGNAVSFRIATLPCRGGEKVVLRLLQQVGQALDVNTLGMQPLQLADFAHALQQPQGLVLVTGPTGSGKTVTLYSALQKLNTADINICSVEDPVEIPIAGLNQTQIHPRAGLTFQGVLRALLRQDPDVIMIGEIRDGETAEIAIKAAQTGHLVLSTLHTNSTCETLVRLQQMGVARWMLSSALTLVIAQRLVRKLCPHCRRQQGEPIHIPDNVWPSPLPHWQAPGCVHCYHGFYGRTALFEVLPITPVIRQLISANTDVESLETHARQAGMRTLFENGCLAVEQGLTTFEELIRVLGMPHGE.

222 to 229 serves as a coordination point for ATP; the sequence is GPTGSGKT.

Belongs to the GSP E family.

This chain is Protein transport protein HofB homolog (hofB), found in Escherichia coli (strain K12).